The following is a 354-amino-acid chain: Holliday junction branch migration complex subunit RuvB (354 aa).

Positions 1 to 38 (MSDFERTEFELPPGVGHSQNEDLNPQQTAGDSDIDTSL) are disordered. The tract at residues 2-199 (SDFERTEFEL…FGFTAQMEFY (198 aa)) is large ATPase domain (RuvB-L). A compositionally biased stretch (polar residues) spans 17–30 (HSQNEDLNPQQTAG). Residues L38, R39, G80, K83, T84, T85, 146 to 148 (EDF), R189, Y199, and R236 contribute to the ATP site. T84 is a Mg(2+) binding site. Residues 200-270 (DTADLTRVVT…VARAALLVFD (71 aa)) form a small ATPAse domain (RuvB-S) region. Residues 273-354 (ESGLDRLDRA…LEPPEGTIGL (82 aa)) form a head domain (RuvB-H) region. Residues R328 and R333 each coordinate DNA.

This sequence belongs to the RuvB family. In terms of assembly, homohexamer. Forms an RuvA(8)-RuvB(12)-Holliday junction (HJ) complex. HJ DNA is sandwiched between 2 RuvA tetramers; dsDNA enters through RuvA and exits via RuvB. An RuvB hexamer assembles on each DNA strand where it exits the tetramer. Each RuvB hexamer is contacted by two RuvA subunits (via domain III) on 2 adjacent RuvB subunits; this complex drives branch migration. In the full resolvosome a probable DNA-RuvA(4)-RuvB(12)-RuvC(2) complex forms which resolves the HJ.

The protein resides in the cytoplasm. It carries out the reaction ATP + H2O = ADP + phosphate + H(+). Functionally, the RuvA-RuvB-RuvC complex processes Holliday junction (HJ) DNA during genetic recombination and DNA repair, while the RuvA-RuvB complex plays an important role in the rescue of blocked DNA replication forks via replication fork reversal (RFR). RuvA specifically binds to HJ cruciform DNA, conferring on it an open structure. The RuvB hexamer acts as an ATP-dependent pump, pulling dsDNA into and through the RuvAB complex. RuvB forms 2 homohexamers on either side of HJ DNA bound by 1 or 2 RuvA tetramers; 4 subunits per hexamer contact DNA at a time. Coordinated motions by a converter formed by DNA-disengaged RuvB subunits stimulates ATP hydrolysis and nucleotide exchange. Immobilization of the converter enables RuvB to convert the ATP-contained energy into a lever motion, pulling 2 nucleotides of DNA out of the RuvA tetramer per ATP hydrolyzed, thus driving DNA branch migration. The RuvB motors rotate together with the DNA substrate, which together with the progressing nucleotide cycle form the mechanistic basis for DNA recombination by continuous HJ branch migration. Branch migration allows RuvC to scan DNA until it finds its consensus sequence, where it cleaves and resolves cruciform DNA. The sequence is that of Holliday junction branch migration complex subunit RuvB from Corynebacterium jeikeium (strain K411).